The sequence spans 455 residues: 3-isopropylmalate dehydratase large subunit (455 aa).

Residues cysteine 336, cysteine 396, and cysteine 399 each coordinate [4Fe-4S] cluster.

It belongs to the aconitase/IPM isomerase family. LeuC type 1 subfamily. In terms of assembly, heterodimer of LeuC and LeuD. It depends on [4Fe-4S] cluster as a cofactor.

It catalyses the reaction (2R,3S)-3-isopropylmalate = (2S)-2-isopropylmalate. The protein operates within amino-acid biosynthesis; L-leucine biosynthesis; L-leucine from 3-methyl-2-oxobutanoate: step 2/4. In terms of biological role, catalyzes the isomerization between 2-isopropylmalate and 3-isopropylmalate, via the formation of 2-isopropylmaleate. This is 3-isopropylmalate dehydratase large subunit from Staphylococcus aureus (strain MRSA252).